The primary structure comprises 119 residues: Ribonuclease P protein component (119 aa).

The protein belongs to the RnpA family. As to quaternary structure, consists of a catalytic RNA component (M1 or rnpB) and a protein subunit.

The catalysed reaction is Endonucleolytic cleavage of RNA, removing 5'-extranucleotides from tRNA precursor.. Functionally, RNaseP catalyzes the removal of the 5'-leader sequence from pre-tRNA to produce the mature 5'-terminus. It can also cleave other RNA substrates such as 4.5S RNA. The protein component plays an auxiliary but essential role in vivo by binding to the 5'-leader sequence and broadening the substrate specificity of the ribozyme. This chain is Ribonuclease P protein component, found in Erwinia tasmaniensis (strain DSM 17950 / CFBP 7177 / CIP 109463 / NCPPB 4357 / Et1/99).